A 258-amino-acid polypeptide reads, in one-letter code: PHD finger protein ALFIN-LIKE 1 (258 aa).

A compositionally biased stretch (basic and acidic residues) spans 1–10 (MDASYRRDGR). Disordered stretches follow at residues 1-24 (MDAS…SAPR) and 150-200 (SGSR…DGDH). Over residues 11–21 (GGGGGGGGGGS) the composition is skewed to gly residues. Basic and acidic residues predominate over residues 175-187 (HTSDVARVENNIK). Acidic residues predominate over residues 188 to 199 (EEDEGYDEDDGD). The PHD-type zinc finger occupies 202–254 (ETLCGTCGGIYSADEFWIGCDVCERWYHGKCVKITPAKAESIKQYKCPSCSSK).

This sequence belongs to the Alfin family. As to quaternary structure, interacts with H3K4me3 and to a lesser extent with H3K4me2.

The protein resides in the nucleus. In terms of biological role, histone-binding component that specifically recognizes H3 tails trimethylated on 'Lys-4' (H3K4me3), which mark transcription start sites of virtually all active genes. This chain is PHD finger protein ALFIN-LIKE 1, found in Oryza sativa subsp. indica (Rice).